Reading from the N-terminus, the 352-residue chain is 4-hydroxy-3-methylbut-2-en-1-yl diphosphate synthase (flavodoxin) (352 aa).

4 residues coordinate [4Fe-4S] cluster: cysteine 265, cysteine 268, cysteine 300, and glutamate 307.

The protein belongs to the IspG family. Requires [4Fe-4S] cluster as cofactor.

It catalyses the reaction (2E)-4-hydroxy-3-methylbut-2-enyl diphosphate + oxidized [flavodoxin] + H2O + 2 H(+) = 2-C-methyl-D-erythritol 2,4-cyclic diphosphate + reduced [flavodoxin]. Its pathway is isoprenoid biosynthesis; isopentenyl diphosphate biosynthesis via DXP pathway; isopentenyl diphosphate from 1-deoxy-D-xylulose 5-phosphate: step 5/6. In terms of biological role, converts 2C-methyl-D-erythritol 2,4-cyclodiphosphate (ME-2,4cPP) into 1-hydroxy-2-methyl-2-(E)-butenyl 4-diphosphate. In Persephonella marina (strain DSM 14350 / EX-H1), this protein is 4-hydroxy-3-methylbut-2-en-1-yl diphosphate synthase (flavodoxin).